Here is a 322-residue protein sequence, read N- to C-terminus: Short-chain dehydrogenase TIC 32, chloroplastic (322 aa).

NADP(+) is bound by residues 36–42 (GASSGIG), 88–89 (DL), asparagine 115, and threonine 136. Substrate is bound at residue serine 170. Residue tyrosine 192 is the Proton acceptor of the active site. Residues 298-314 (DTELAKKVWDFSTKLTD) are interaction with calmodulin.

Belongs to the short-chain dehydrogenases/reductases (SDR) family. In terms of assembly, part of the Tic complex. Interacts with TIC110. Expressed in leaves and roots.

Its subcellular location is the plastid. The protein resides in the chloroplast inner membrane. In terms of biological role, involved in protein precursor import into chloroplasts. Part of the redox regulon consisting of TIC32, TIC 55 and TIC62. This chain is Short-chain dehydrogenase TIC 32, chloroplastic, found in Arabidopsis thaliana (Mouse-ear cress).